A 117-amino-acid chain; its full sequence is Small ribosomal subunit protein uS13 (117 aa).

The disordered stretch occupies residues 94–117; the sequence is SLPLRGQRTKTNARTRKGPRRLIK.

This sequence belongs to the universal ribosomal protein uS13 family. Part of the 30S ribosomal subunit. Forms a loose heterodimer with protein S19. Forms two bridges to the 50S subunit in the 70S ribosome.

Functionally, located at the top of the head of the 30S subunit, it contacts several helices of the 16S rRNA. In the 70S ribosome it contacts the 23S rRNA (bridge B1a) and protein L5 of the 50S subunit (bridge B1b), connecting the 2 subunits; these bridges are implicated in subunit movement. Contacts the tRNAs in the A and P-sites. The protein is Small ribosomal subunit protein uS13 of Vesicomyosocius okutanii subsp. Calyptogena okutanii (strain HA).